Here is a 301-residue protein sequence, read N- to C-terminus: 3-dehydroquinate dehydratase (301 aa).

The interval 1–221 is 3-dehydroquinate dehydratase; the sequence is MLQYGVLICG…YYAALLALGI (221 aa). Residues 32-34 and Arg-63 each bind 3-dehydroquinate; that span reads ELR. The active-site Proton donor/acceptor is His-119. The active-site Schiff-base intermediate with substrate is Lys-145. 3-dehydroquinate contacts are provided by Arg-183, Thr-202, and Gln-206. In terms of domain architecture, Chorismate mutase spans 222-301; the sequence is TPSGGGLPAL…QMCKAVQLVA (80 aa).

It belongs to the type-I 3-dehydroquinase family. As to quaternary structure, homodimer.

The enzyme catalyses 3-dehydroquinate = 3-dehydroshikimate + H2O. It functions in the pathway metabolic intermediate biosynthesis; chorismate biosynthesis; chorismate from D-erythrose 4-phosphate and phosphoenolpyruvate: step 3/7. Involved in the third step of the chorismate pathway, which leads to the biosynthesis of aromatic amino acids. Catalyzes the cis-dehydration of 3-dehydroquinate (DHQ) and introduces the first double bond of the aromatic ring to yield 3-dehydroshikimate. The sequence is that of 3-dehydroquinate dehydratase from Pyrobaculum aerophilum (strain ATCC 51768 / DSM 7523 / JCM 9630 / CIP 104966 / NBRC 100827 / IM2).